A 226-amino-acid chain; its full sequence is 7-cyano-7-deazaguanine synthase (226 aa).

An ATP-binding site is contributed by 10-20 (LSGGLDSATAA). Zn(2+)-binding residues include Cys-191, Cys-199, Cys-202, and Cys-205.

It belongs to the QueC family. Zn(2+) is required as a cofactor.

It carries out the reaction 7-carboxy-7-deazaguanine + NH4(+) + ATP = 7-cyano-7-deazaguanine + ADP + phosphate + H2O + H(+). The protein operates within purine metabolism; 7-cyano-7-deazaguanine biosynthesis. In terms of biological role, catalyzes the ATP-dependent conversion of 7-carboxy-7-deazaguanine (CDG) to 7-cyano-7-deazaguanine (preQ(0)). The sequence is that of 7-cyano-7-deazaguanine synthase from Synechococcus sp. (strain CC9902).